The primary structure comprises 377 residues: Anhydro-N-acetylmuramic acid kinase (377 aa).

An ATP-binding site is contributed by 18 to 25; it reads GTSADGID.

Belongs to the anhydro-N-acetylmuramic acid kinase family.

The enzyme catalyses 1,6-anhydro-N-acetyl-beta-muramate + ATP + H2O = N-acetyl-D-muramate 6-phosphate + ADP + H(+). It participates in amino-sugar metabolism; 1,6-anhydro-N-acetylmuramate degradation. It functions in the pathway cell wall biogenesis; peptidoglycan recycling. In terms of biological role, catalyzes the specific phosphorylation of 1,6-anhydro-N-acetylmuramic acid (anhMurNAc) with the simultaneous cleavage of the 1,6-anhydro ring, generating MurNAc-6-P. Is required for the utilization of anhMurNAc either imported from the medium or derived from its own cell wall murein, and thus plays a role in cell wall recycling. In Xanthomonas oryzae pv. oryzae (strain MAFF 311018), this protein is Anhydro-N-acetylmuramic acid kinase.